The primary structure comprises 184 residues: ATP synthase subunit delta (184 aa).

It belongs to the ATPase delta chain family. As to quaternary structure, F-type ATPases have 2 components, F(1) - the catalytic core - and F(0) - the membrane proton channel. F(1) has five subunits: alpha(3), beta(3), gamma(1), delta(1), epsilon(1). F(0) has three main subunits: a(1), b(2) and c(10-14). The alpha and beta chains form an alternating ring which encloses part of the gamma chain. F(1) is attached to F(0) by a central stalk formed by the gamma and epsilon chains, while a peripheral stalk is formed by the delta and b chains.

Its subcellular location is the cell inner membrane. Functionally, f(1)F(0) ATP synthase produces ATP from ADP in the presence of a proton or sodium gradient. F-type ATPases consist of two structural domains, F(1) containing the extramembraneous catalytic core and F(0) containing the membrane proton channel, linked together by a central stalk and a peripheral stalk. During catalysis, ATP synthesis in the catalytic domain of F(1) is coupled via a rotary mechanism of the central stalk subunits to proton translocation. This protein is part of the stalk that links CF(0) to CF(1). It either transmits conformational changes from CF(0) to CF(1) or is implicated in proton conduction. The chain is ATP synthase subunit delta from Rhizorhabdus wittichii (strain DSM 6014 / CCUG 31198 / JCM 15750 / NBRC 105917 / EY 4224 / RW1) (Sphingomonas wittichii).